The sequence spans 436 residues: Cyclic nucleotide-binding domain-containing protein 1 (436 aa).

Residues 89-105 (EQRELNEGKEESQHQQP) are compositionally biased toward basic and acidic residues. Positions 89-108 (EQRELNEGKEESQHQQPDDS) are disordered. A nucleoside 3',5'-cyclic phosphate is bound at residue 322–436 (YYEEWPTLSI…IIEDKDLFVA (115 aa)).

The protein is Cyclic nucleotide-binding domain-containing protein 1 (CNBD1) of Homo sapiens (Human).